The chain runs to 241 residues: Neuromodulin (241 aa).

Over residues 1–26 (TKQVEKNEDGDQKIEQDGIKPEDKAH) the composition is skewed to basic and acidic residues. Positions 1–241 (TKQVEKNEDG…EESKADQENA (241 aa)) are disordered. Residues 25–54 (AHKAATKIQASFRGHITRKKLKGEKKGDAP) enclose the IQ domain. 2 stretches are compositionally biased toward low complexity: residues 80-95 (APAATEAAAADSAQQE) and 118-131 (SEQPAPQAATPAAS). 2 stretches are compositionally biased toward basic and acidic residues: residues 132–147 (SEEKTAAAAAPEREST) and 159–171 (KADEAQDKEEPKQ). Low complexity predominate over residues 172-198 (ADVPAADTTATTTPAAEDATAKATAQP). 2 stretches are compositionally biased toward basic and acidic residues: residues 208–220 (TEEKTDAVEETKP) and 232–241 (EESKADQENA).

It belongs to the neuromodulin family. In terms of assembly, binds calmodulin with a greater affinity in the absence of Ca(2+) than in its presence. Palmitoylated. Palmitoylation is essential for plasma membrane association.

The protein resides in the cell membrane. It is found in the cell projection. Its subcellular location is the growth cone membrane. The protein localises to the synapse. It localises to the filopodium membrane. In terms of biological role, this protein is associated with nerve growth. It is a major component of the motile 'growth cones' that form the tips of elongating axons. Plays a role in axonal and dendritic filopodia induction. The polypeptide is Neuromodulin (GAP43) (Serinus canaria (Island canary)).